We begin with the raw amino-acid sequence, 435 residues long: MSEGPKGLAIAAPASGSGKTTLTLGLLRALTRRGLRVQPFKNGPDYIDPAFHAAAAGRASFNLDGWAMDRPQLHALAGQAAGADLVIFEGAMGLYDGPADPGRSGRGTSAEIARMFGWPVVLVLDVKGQGQSAAATALGFARHPEAPPLAGVILNHVASPRHEAMIRAEMDRLGLRVLGALPRRSDLSLPERHLGLVQAEEQAGLEATLEALADFVAAHVDLEALLSVAGAGPAPGAGAWAVPPAGRIALARDAAFSFVYPHMLEAWRRAGVTVLPFSPLADQAPDPSADLVWLPGGYPELHAGRIAAATRFKAGLRAFAETRSVHGECGGYMVLGARLVDAEGRAHAMAGLLGLVTSYEKRRLHLGYRSADLLAPLPGYGAGSRLYGHEFHYSTILEQPDAPLAKVCDAAGAPVAETGSVRGHVTGSFFHLIAG.

The GATase cobBQ-type domain occupies Arg-247 to Gly-435. Residue Cys-329 is the Nucleophile of the active site.

Belongs to the CobB/CbiA family. It depends on Mg(2+) as a cofactor.

It carries out the reaction hydrogenobyrinate + 2 L-glutamine + 2 ATP + 2 H2O = hydrogenobyrinate a,c-diamide + 2 L-glutamate + 2 ADP + 2 phosphate + 2 H(+). It functions in the pathway cofactor biosynthesis; adenosylcobalamin biosynthesis; cob(II)yrinate a,c-diamide from precorrin-2 (aerobic route): step 9/10. Catalyzes the ATP-dependent amidation of the two carboxylate groups at positions a and c of hydrogenobyrinate, using either L-glutamine or ammonia as the nitrogen source. This chain is Hydrogenobyrinate a,c-diamide synthase, found in Rhodobacter capsulatus (strain ATCC BAA-309 / NBRC 16581 / SB1003).